Consider the following 394-residue polypeptide: 4-hydroxyphenylpyruvate dioxygenase (394 aa).

VOC domains follow at residues 18–149 and 181–339; these read SFHH…LLEY and FIDH…IFTK. H184, H267, and E350 together coordinate Fe cation.

Belongs to the 4HPPD family. In terms of assembly, homodimer. The cofactor is Fe cation.

The protein localises to the cytoplasm. It localises to the endoplasmic reticulum membrane. Its subcellular location is the golgi apparatus membrane. The catalysed reaction is 3-(4-hydroxyphenyl)pyruvate + O2 = homogentisate + CO2. The protein operates within amino-acid degradation; L-phenylalanine degradation; acetoacetate and fumarate from L-phenylalanine: step 3/6. In terms of biological role, catalyzes the conversion of 4-hydroxyphenylpyruvic acid to homogentisic acid, one of the steps in tyrosine catabolism. The sequence is that of 4-hydroxyphenylpyruvate dioxygenase (hpd) from Xenopus tropicalis (Western clawed frog).